A 118-amino-acid polypeptide reads, in one-letter code: Large ribosomal subunit protein bL19 (118 aa).

Belongs to the bacterial ribosomal protein bL19 family.

In terms of biological role, this protein is located at the 30S-50S ribosomal subunit interface and may play a role in the structure and function of the aminoacyl-tRNA binding site. This is Large ribosomal subunit protein bL19 (rplS) from Serratia marcescens.